A 267-amino-acid chain; its full sequence is Proteasome subunit alpha (267 aa).

Positions 231–267 (ETLLQERDSKESAESEEPKESEEGKKTGKKSDADSSD) are disordered. Residues 234-267 (LQERDSKESAESEEPKESEEGKKTGKKSDADSSD) show a composition bias toward basic and acidic residues.

The protein belongs to the peptidase T1A family. In terms of assembly, the 20S proteasome core is composed of 14 alpha and 14 beta subunits that assemble into four stacked heptameric rings, resulting in a barrel-shaped structure. The two inner rings, each composed of seven catalytic beta subunits, are sandwiched by two outer rings, each composed of seven alpha subunits. The catalytic chamber with the active sites is on the inside of the barrel. Has a gated structure, the ends of the cylinder being occluded by the N-termini of the alpha-subunits. Is capped by the proteasome-associated ATPase, ARC.

The protein resides in the cytoplasm. The protein operates within protein degradation; proteasomal Pup-dependent pathway. The formation of the proteasomal ATPase ARC-20S proteasome complex, likely via the docking of the C-termini of ARC into the intersubunit pockets in the alpha-rings, may trigger opening of the gate for substrate entry. Interconversion between the open-gate and close-gate conformations leads to a dynamic regulation of the 20S proteasome proteolysis activity. Functionally, component of the proteasome core, a large protease complex with broad specificity involved in protein degradation. This chain is Proteasome subunit alpha, found in Mycobacterium marinum (strain ATCC BAA-535 / M).